The following is a 1849-amino-acid chain: TATA-binding protein-associated factor 172 (1849 aa).

The segment at 77–97 is disordered; the sequence is NPVPRTRQEPTSESSMEDSPT. Residues 85–97 show a composition bias toward polar residues; it reads EPTSESSMEDSPT. A phosphoserine mark is found at Ser-91 and Ser-95. The Nuclear localization signal signature appears at 191–207; sequence QAAELIDSEFRAGMSNR. A disordered region spans residues 219–247; sequence FAKQRSRDAVETNEKSNDSTDGEPEEKRR. Basic and acidic residues predominate over residues 223–236; sequence RSRDAVETNEKSND. HEAT repeat units lie at residues 385–422, 426–463, 513–550, 554–596, 818–855, 872–910, 1102–1139, and 1182–1219; these read TGVH…VRQD, TLLP…SLVY, QSLT…TQDQ, SWLI…KASV, TSSF…LQLR, EKLN…QCTT, PLLV…IATM, and PYIV…LMPL. The region spanning 1278 to 1453 is the Helicase ATP-binding domain; that stretch reads AFLNKYKLHG…WSLFDFLMPG (176 aa). Residue 1291–1298 participates in ATP binding; sequence DDMGLGKT. Residues 1404-1407 carry the DEGH box motif; sequence DEGH. Residues 1636–1790 form the Helicase C-terminal domain; sequence SGTESVVAQH…QENSSLQSMG (155 aa).

It belongs to the SNF2/RAD54 helicase family. In terms of assembly, associates with TBP to form B-TFIID. Binds DRAP1.

Its subcellular location is the nucleus. Its function is as follows. Regulates transcription in association with TATA binding protein (TBP). Removes TBP from the TATA box in an ATP-dependent manner. The polypeptide is TATA-binding protein-associated factor 172 (BTAF1) (Homo sapiens (Human)).